The following is a 497-amino-acid chain: Aldehyde dehydrogenase (497 aa).

241–246 is a binding site for NAD(+); sequence GSTLVG. Residue Glu-264 is the Proton acceptor of the active site. Residue Cys-298 is the Nucleophile of the active site.

Belongs to the aldehyde dehydrogenase family.

The catalysed reaction is an aldehyde + NAD(+) + H2O = a carboxylate + NADH + 2 H(+). The protein operates within alcohol metabolism; ethanol degradation; acetate from ethanol: step 2/2. This Emericella nidulans (strain FGSC A4 / ATCC 38163 / CBS 112.46 / NRRL 194 / M139) (Aspergillus nidulans) protein is Aldehyde dehydrogenase (aldA).